The sequence spans 323 residues: Prostaglandin F synthase 2 (323 aa).

Residues 20–24 and aspartate 50 contribute to the NADP(+) site; that span reads GFGTY. Tyrosine 55 functions as the Proton donor in the catalytic mechanism. Histidine 117 provides a ligand contact to substrate. Residues 166–167, glutamine 190, 216–221, and 270–280 each bind NADP(+); these read SN, YAALGA, and KSFNKKRIKEN.

This sequence belongs to the aldo/keto reductase family. As to quaternary structure, monomer.

It is found in the cytoplasm. The catalysed reaction is prostaglandin F2alpha + NADP(+) = prostaglandin D2 + NADPH + H(+). The protein operates within lipid metabolism; prostaglandin biosynthesis. Functionally, catalyzes the reduction of PGD(2) and PGH(2) to PGF(2 alpha) and a stereoisomer, respectively. It has a broad substrate specificity and also reduces other carbonyl compounds. This is Prostaglandin F synthase 2 from Bos taurus (Bovine).